The chain runs to 538 residues: Phosphoenolpyruvate carboxykinase (ATP) (538 aa).

Positions 64, 205, and 211 each coordinate substrate. ATP is bound by residues Lys-211, His-230, and 246-254 (GLSGTGKTT). Mn(2+) is bound by residues Lys-211 and His-230. Asp-267 is a binding site for Mn(2+). ATP-binding positions include Glu-295, Arg-331, 447–448 (RI), and Thr-453. Arg-331 serves as a coordination point for substrate.

It belongs to the phosphoenolpyruvate carboxykinase (ATP) family. In terms of assembly, monomer. It depends on Mn(2+) as a cofactor.

It localises to the cytoplasm. The enzyme catalyses oxaloacetate + ATP = phosphoenolpyruvate + ADP + CO2. It participates in carbohydrate biosynthesis; gluconeogenesis. Its function is as follows. Involved in the gluconeogenesis. Catalyzes the conversion of oxaloacetate (OAA) to phosphoenolpyruvate (PEP) through direct phosphoryl transfer between the nucleoside triphosphate and OAA. In Mannheimia succiniciproducens (strain KCTC 0769BP / MBEL55E), this protein is Phosphoenolpyruvate carboxykinase (ATP).